The following is a 145-amino-acid chain: 3-dehydroquinate dehydratase (145 aa).

The active-site Proton acceptor is the tyrosine 23. Residues asparagine 73, histidine 79, and aspartate 86 each coordinate substrate. Catalysis depends on histidine 99, which acts as the Proton donor. Residues 100 to 101 (LS) and arginine 110 contribute to the substrate site.

The protein belongs to the type-II 3-dehydroquinase family. In terms of assembly, homododecamer.

The enzyme catalyses 3-dehydroquinate = 3-dehydroshikimate + H2O. Its pathway is metabolic intermediate biosynthesis; chorismate biosynthesis; chorismate from D-erythrose 4-phosphate and phosphoenolpyruvate: step 3/7. Catalyzes a trans-dehydration via an enolate intermediate. The chain is 3-dehydroquinate dehydratase from Desulfitobacterium hafniense (strain Y51).